The sequence spans 517 residues: 2-isopropylmalate synthase (517 aa).

The 264-residue stretch at 5–268 folds into the Pyruvate carboxyltransferase domain; that stretch reads IIIFDTTLRD…DTRINTQEIH (264 aa). Residues Asp-14, His-202, His-204, and Asn-238 each contribute to the Mn(2+) site. Positions 393–517 are regulatory domain; that stretch reads SLDVITSQTI…ADLKSHKISQ (125 aa).

It belongs to the alpha-IPM synthase/homocitrate synthase family. LeuA type 1 subfamily. Homodimer. It depends on Mn(2+) as a cofactor.

It is found in the cytoplasm. The catalysed reaction is 3-methyl-2-oxobutanoate + acetyl-CoA + H2O = (2S)-2-isopropylmalate + CoA + H(+). It participates in amino-acid biosynthesis; L-leucine biosynthesis; L-leucine from 3-methyl-2-oxobutanoate: step 1/4. Functionally, catalyzes the condensation of the acetyl group of acetyl-CoA with 3-methyl-2-oxobutanoate (2-ketoisovalerate) to form 3-carboxy-3-hydroxy-4-methylpentanoate (2-isopropylmalate). The sequence is that of 2-isopropylmalate synthase from Histophilus somni (strain 2336) (Haemophilus somnus).